A 279-amino-acid chain; its full sequence is Large ribosomal subunit protein uL2 (279 aa).

Disordered stretches follow at residues 34–58 (LRPL…GGGH) and 225–279 (VMNP…KNKR). The span at 251–268 (GKPEGRTRRPNKESDKLI) shows a compositional bias: basic and acidic residues. The segment covering 269–279 (VRRRRTGKNKR) has biased composition (basic residues).

It belongs to the universal ribosomal protein uL2 family. Part of the 50S ribosomal subunit. Forms a bridge to the 30S subunit in the 70S ribosome.

In terms of biological role, one of the primary rRNA binding proteins. Required for association of the 30S and 50S subunits to form the 70S ribosome, for tRNA binding and peptide bond formation. It has been suggested to have peptidyltransferase activity; this is somewhat controversial. Makes several contacts with the 16S rRNA in the 70S ribosome. The protein is Large ribosomal subunit protein uL2 of Micrococcus luteus (strain ATCC 4698 / DSM 20030 / JCM 1464 / CCM 169 / CCUG 5858 / IAM 1056 / NBRC 3333 / NCIMB 9278 / NCTC 2665 / VKM Ac-2230) (Micrococcus lysodeikticus).